Here is a 309-residue protein sequence, read N- to C-terminus: MATATVPFFDSNDRLFDQGKAFWNNYLKGRPSAPDAFFQRLFNYHQSHGGQFGTVHDVGAGNGPYAHILRSKFQHVIISDIAKENVVLAEDRLGVDGFSYRAARVEEGDDIAPGSVDMVFATNVLHFCDQPLAMSEIARQLRPGGTFACAAFGAAQFEDPRIQDVYTRINHSGGRALLAKADDPEKLVAVMARTQGKYNVAPLDEGLFRPRAQRIHLNMENGGITAPLPPEVQVHEPVYTGVDDVETFVQEDGWSFVTGLEGVKEHVLSFPFARDDPNFGELWQEMEEIIGDDEVKGTWPAKIILATRR.

A methyltransferase domain region spans residues aspartate 57–cysteine 149.

It belongs to the methyltransferase superfamily.

It functions in the pathway secondary metabolite biosynthesis. Functionally, methyltransferase; part of the gene cluster that mediates the biosynthesis of the tetrahydroxanthone dimer secalonic acid D. The pathway begins with the synthesis of atrochrysone thioester by the polyketide synthase AacuL. The atrochrysone carboxyl ACP thioesterase AacuM then breaks the thioester bond and releases the atrochrysone carboxylic acid from AacuL. Atrochrysone carboxylic acid is decarboxylated by the decarboxylase AacuI, and oxidized by the anthrone oxygenase AacuG to yield emodin. Emodin is then reduced to emodin hydroquinone by a yet unidentified oxidoreductase. A-ring reduction by the short chain dehydrogenase AacuN, dehydration by the scytalone dehydratase-like protein AacuK and probable spontaneous re-oxidation, results in overall deoxygenation to chrysophanol. Baeyer-Villiger oxidation by the Baeyer-Villiger monooxygenase (BVMO) AacuH then yields monodictyphenone. Monodictyphenone is transformed into compounds with the tetrahydroxanthone skeleton via methylesterification by the methyltransferase AacuQ, followed by the action of the flavin-dependent monooxygenase AacuC, the isomerase AacuP, and the short chain dehydrogenase/reductase AacuF or AacuD. AacuF and AacuD should accept the same compound as a substrate but perform the ketoreduction with a different stereoselectivity, thus yielding blennolides B and A, respectively. In the final step of the biosynthesis, the cytochrome P450 monooxygenase AacuE accepts blennolide B and/or blennolide A to conduct the dimerization reaction to furnish the tetrahydroxanthone dimers, secalonic acids D, B, and F. This chain is Methyltransferase AacuQ, found in Aspergillus aculeatus (strain ATCC 16872 / CBS 172.66 / WB 5094).